Reading from the N-terminus, the 140-residue chain is UPF0134 protein MPN_094 (140 aa).

The protein belongs to the UPF0134 family.

The chain is UPF0134 protein MPN_094 from Mycoplasma pneumoniae (strain ATCC 29342 / M129 / Subtype 1) (Mycoplasmoides pneumoniae).